Consider the following 423-residue polypeptide: E3 ubiquitin-protein ligase makorin-2 (423 aa).

C3H1-type zinc fingers lie at residues 2 to 29 and 31 to 58; these read STKQ…HDLN and SKPS…HIKP. The interval 59–90 is disordered; that stretch reads SSRGGGGGAPEDQAGGGGAGGGGAGIGGAGGG. The span at 61 to 90 shows a compositional bias: gly residues; sequence RGGGGGAPEDQAGGGGAGGGGAGIGGAGGG. The C3H1-type 3 zinc finger occupies 162 to 189; sequence QNLPQLCPYAANGHCFYEENCTYLHGDL. The interval 190–219 is makorin-type Cys-His; that stretch reads CEVCGLQVLHPHDSEQRRAHEKMCLAAFEA. The segment at 235-289 adopts an RING-type zinc-finger fold; the sequence is CSICMEVVVQKANPSDRRFGILSSCCHTFCLACIRKWRCTRTFSNTIIKSCPECR. A C3H1-type 4 zinc finger spans residues 318–347; sequence GVSKKACKYFDQGRGSCPFGGKCLYLHAFP.

It is found in the cytoplasm. It localises to the nucleus. It catalyses the reaction S-ubiquitinyl-[E2 ubiquitin-conjugating enzyme]-L-cysteine + [acceptor protein]-L-lysine = [E2 ubiquitin-conjugating enzyme]-L-cysteine + N(6)-ubiquitinyl-[acceptor protein]-L-lysine.. Its pathway is protein modification; protein ubiquitination. E3 ubiquitin ligase catalyzing the covalent attachment of ubiquitin moieties onto substrate proteins. Inhibits neurogenesis and axis formation during embryonic development by modulating the phosphatidylinositol 3-kinase (PI3K) pathway. Acts downstream of PI3K and akt1 to up-regulate gsk3b mRNA expression. The protein is E3 ubiquitin-protein ligase makorin-2 (mkrn2) of Seriola quinqueradiata (Five-ray yellowtail).